A 249-amino-acid chain; its full sequence is DNA repair protein RecO (249 aa).

The protein belongs to the RecO family.

Involved in DNA repair and RecF pathway recombination. The sequence is that of DNA repair protein RecO from Mycoplasma mycoides subsp. mycoides SC (strain CCUG 32753 / NCTC 10114 / PG1).